Reading from the N-terminus, the 533-residue chain is (E)-beta-farnesene synthase (533 aa).

5 residues coordinate Mg(2+): Asp286, Asp290, Asn430, Ser434, and Glu438. The DDXXD motif motif lies at 286 to 290 (DDMMD).

It belongs to the terpene synthase family. The cofactor is Mg(2+). It depends on Co(2+) as a cofactor. Requires Mn(2+) as cofactor.

The protein localises to the cytoplasm. The catalysed reaction is (2E,6E)-farnesyl diphosphate = (E)-beta-farnesene + diphosphate. It participates in secondary metabolite biosynthesis; terpenoid biosynthesis. Functionally, sesquiterpene cyclase catalyzing the production of beta-farnesene and alpha-bergamotene in equal amounts from farnesyl diphosphate. Involved in indirect defense by producing volatile signals attracting natural enemies of herbivores. The sequence is that of (E)-beta-farnesene synthase from Zea mays subsp. huehuetenangensis (San Antonio Huista teosinte).